We begin with the raw amino-acid sequence, 212 residues long: uncharacterized protein (212 aa).

Residues 87–105 are compositionally biased toward low complexity; it reads NNNNNNNNNNNHNHNNSNN. Positions 87–107 are disordered; sequence NNNNNNNNNNNHNHNNSNNTA.

This is an uncharacterized protein from Saccharomyces cerevisiae (strain ATCC 204508 / S288c) (Baker's yeast).